A 540-amino-acid polypeptide reads, in one-letter code: Chaperonin GroEL (540 aa).

ATP is bound by residues 30 to 33 (TLGP), Lys51, 87 to 91 (DGTTT), Gly415, and Asp496.

This sequence belongs to the chaperonin (HSP60) family. In terms of assembly, forms a cylinder of 14 subunits composed of two heptameric rings stacked back-to-back. Interacts with the co-chaperonin GroES.

The protein resides in the cytoplasm. The enzyme catalyses ATP + H2O + a folded polypeptide = ADP + phosphate + an unfolded polypeptide.. Its function is as follows. Together with its co-chaperonin GroES, plays an essential role in assisting protein folding. The GroEL-GroES system forms a nano-cage that allows encapsulation of the non-native substrate proteins and provides a physical environment optimized to promote and accelerate protein folding. The chain is Chaperonin GroEL from Thermodesulfovibrio yellowstonii (strain ATCC 51303 / DSM 11347 / YP87).